Here is a 309-residue protein sequence, read N- to C-terminus: DSC E3 ubiquitin ligase complex subunit C (309 aa).

An N-linked (GlcNAc...) asparagine glycan is attached at Asn61. Disordered stretches follow at residues 88–110 (LPPSPSRTPVVQEDATTVKGKGK) and 148–177 (EQADEGYTGRKKQQQPPPSTTSAPRGFDRL). The next 2 membrane-spanning stretches (helical) occupy residues 257–277 (DDMLWGAVMGFFWPVGCAMWL) and 289–309 (GLAVFVGVVINVAFGAMRIMN).

The protein belongs to the dsc3 family. As to quaternary structure, component of the DSC E3 ubiquitin ligase complex composed of dscA, dscB, dscC and dscD.

The protein resides in the endoplasmic reticulum membrane. The protein operates within protein modification; protein ubiquitination. Component of the DSC E3 ubiquitin ligase complex which is required for the srbA transcriptional activator proteolytic cleavage to release the soluble transcription factor from the membrane in low oxygen or sterol conditions. Required for growth during hypoxia and triazole drug susceptibility, as well as for virulence in a murine model of invasive pulmonary aspergillosis (IPA). The sequence is that of DSC E3 ubiquitin ligase complex subunit C from Aspergillus fumigatus (strain CBS 144.89 / FGSC A1163 / CEA10) (Neosartorya fumigata).